Here is a 282-residue protein sequence, read N- to C-terminus: NADPH-dependent 7-cyano-7-deazaguanine reductase (282 aa).

88-90 (IES) contributes to the substrate binding site. 90–91 (SK) is an NADPH binding site. Catalysis depends on C190, which acts as the Thioimide intermediate. The Proton donor role is filled by D197. Residue 229–230 (HE) coordinates substrate. 258-259 (RG) contributes to the NADPH binding site.

Belongs to the GTP cyclohydrolase I family. QueF type 2 subfamily. In terms of assembly, homodimer.

It localises to the cytoplasm. The catalysed reaction is 7-aminomethyl-7-carbaguanine + 2 NADP(+) = 7-cyano-7-deazaguanine + 2 NADPH + 3 H(+). It participates in tRNA modification; tRNA-queuosine biosynthesis. Catalyzes the NADPH-dependent reduction of 7-cyano-7-deazaguanine (preQ0) to 7-aminomethyl-7-deazaguanine (preQ1). The protein is NADPH-dependent 7-cyano-7-deazaguanine reductase of Shigella dysenteriae serotype 1 (strain Sd197).